We begin with the raw amino-acid sequence, 510 residues long: GMP synthase [glutamine-hydrolyzing] (510 aa).

In terms of domain architecture, Glutamine amidotransferase type-1 spans 5-195 (LVLILDFGGQ…LYEVCHCQGD (191 aa)). Cys-82 serves as the catalytic Nucleophile. Catalysis depends on residues His-169 and Glu-171. The GMPS ATP-PPase domain maps to 196-385 (WTMENYIEKE…LGVPEEIVWR (190 aa)). 223–229 (SGGVDSS) provides a ligand contact to ATP.

As to quaternary structure, homodimer.

It carries out the reaction XMP + L-glutamine + ATP + H2O = GMP + L-glutamate + AMP + diphosphate + 2 H(+). The protein operates within purine metabolism; GMP biosynthesis; GMP from XMP (L-Gln route): step 1/1. In terms of biological role, catalyzes the synthesis of GMP from XMP. This chain is GMP synthase [glutamine-hydrolyzing], found in Alkaliphilus metalliredigens (strain QYMF).